A 213-amino-acid chain; its full sequence is Ribosomal RNA large subunit methyltransferase E (213 aa).

Gly-60, Trp-62, Asp-80, Asp-96, and Asp-121 together coordinate S-adenosyl-L-methionine. The active-site Proton acceptor is Lys-161.

This sequence belongs to the class I-like SAM-binding methyltransferase superfamily. RNA methyltransferase RlmE family.

The protein resides in the cytoplasm. The enzyme catalyses uridine(2552) in 23S rRNA + S-adenosyl-L-methionine = 2'-O-methyluridine(2552) in 23S rRNA + S-adenosyl-L-homocysteine + H(+). Functionally, specifically methylates the uridine in position 2552 of 23S rRNA at the 2'-O position of the ribose in the fully assembled 50S ribosomal subunit. This is Ribosomal RNA large subunit methyltransferase E from Xylella fastidiosa (strain M23).